We begin with the raw amino-acid sequence, 59 residues long: Protein ORF5a (59 aa).

Residues 13 to 33 form a helical; Signal-anchor for type III membrane protein membrane-spanning segment; sequence VIYDCIAILALGCAITCLLLI.

Its subcellular location is the membrane. This Equine arteritis virus (strain Bucyrus) (EAV) protein is Protein ORF5a (GP5).